The primary structure comprises 348 residues: N-formyl peptide receptor 2 (348 aa).

An N-linked (GlcNAc...) asparagine glycan is attached at Asn1. The Extracellular segment spans residues 1–24; sequence NFSTPLNEYEEGSYESAGYTVLRI. The helical transmembrane segment at 25 to 47 threads the bilayer; that stretch reads LPLVVLGVTFVLGVLGNGLVIWV. Residues 48 to 58 lie on the Cytoplasmic side of the membrane; that stretch reads AGFRMTRTVTT. Residues 59-80 form a helical membrane-spanning segment; the sequence is ICYLNLALADFSFTATLPFLIV. At 81–97 the chain is on the extracellular side; the sequence is SMAMGEKWPFGWFLCKL. Cys95 and Cys173 are disulfide-bonded. The chain crosses the membrane as a helical span at residues 98–118; sequence IHIVVDINLFGSVFLIGFIAL. Residues 119 to 137 are Cytoplasmic-facing; it reads DRCICVLHPVWAQNHRTVS. Residues 138 to 159 traverse the membrane as a helical segment; it reads LAMKVIVGPWILALVLTLPVFL. Residues 160 to 202 lie on the Extracellular side of the membrane; that stretch reads FLTTVTIPNGDTYCTFNFASWGGTPEERLKVAITLLTARGIIR. A helical membrane pass occupies residues 203 to 223; the sequence is FVIGFSLPMSIVAICYGLIAA. Over 224–239 the chain is Cytoplasmic; the sequence is KIHKKGMIKSSRPLRV. The chain crosses the membrane as a helical span at residues 240-263; that stretch reads LTAVVASFFICWFPFQLVALLGTV. The Extracellular segment spans residues 264–283; the sequence is WLKEMLFYGKYKIIDILVNP. The helical transmembrane segment at 284-303 threads the bilayer; sequence TSSLAFFNCCLNPMLYVFVG. Residues 304-348 are Cytoplasmic-facing; sequence QDFRERLIHSLPTSLERALSEDSAPTNDTAANCASPPAETELQAM. Positions 322–348 are disordered; that stretch reads LSEDSAPTNDTAANCASPPAETELQAM. Residues 326 to 335 are compositionally biased toward polar residues; it reads SAPTNDTAAN.

It belongs to the G-protein coupled receptor 1 family. As to quaternary structure, interacts with Amyloid-beta protein 42, product of APP; the interaction takes place at the cell surface and the complex is then rapidly internalized.

The protein resides in the cell membrane. In terms of biological role, low affinity receptor for N-formyl-methionyl peptides, which are powerful neutrophil chemotactic factors. Binding of FMLP to the receptor causes activation of neutrophils. This response is mediated via a G-protein that activates a phosphatidylinositol-calcium second messenger system. Receptor for the chemokine-like protein FAM19A5, mediating FAM19A5-stimulated macrophage chemotaxis and the inhibitory effect on TNFSF11/RANKL-induced osteoclast differentiation. The chain is N-formyl peptide receptor 2 (FPR2) from Pan troglodytes (Chimpanzee).